A 140-amino-acid polypeptide reads, in one-letter code: Large ribosomal subunit protein bL21 (140 aa).

The tract at residues 106-140 (SGVKPAVGARTKIEPAVKPAKAKKSEAEASAEDAN) is disordered.

The protein belongs to the bacterial ribosomal protein bL21 family. As to quaternary structure, part of the 50S ribosomal subunit. Contacts protein L20.

Its function is as follows. This protein binds to 23S rRNA in the presence of protein L20. The chain is Large ribosomal subunit protein bL21 from Paracoccus denitrificans (strain Pd 1222).